Consider the following 1055-residue polypeptide: Cellulose synthase A catalytic subunit 9 [UDP-forming] (1055 aa).

Residues 1–268 (MEASAGLVAG…ASSKVNPYRM (268 aa)) are Cytoplasmic-facing. Zn(2+)-binding residues include Cys-37, Cys-40, Cys-56, Cys-59, Cys-64, Cys-67, Cys-79, and Cys-82. Residues 37 to 83 (CEICGDEVGRTVDGDLFVACNECGFPVCRPCYEYERREGTQNCPQCK) form an RING-type; degenerate zinc finger. A helical transmembrane segment spans residues 269–289 (VIILRLVVLGFFLRYRILHPV). Residues 290-291 (PD) lie on the Extracellular side of the membrane. A helical transmembrane segment spans residues 292-312 (AIPLWLTSIICEIWFAVSWIL). Residues 313-831 (DQFPKWYPID…LERFSYINTT (519 aa)) lie on the Cytoplasmic side of the membrane. Positions 351, 357, 358, and 387 each coordinate UDP-alpha-D-glucose. Asp-387 is an active-site residue. Positions 439–468 (NFVQERRAMKREYEEFKVRINALVAKAQKV) form a coiled coil. Position 528 (Lys-528) interacts with UDP-alpha-D-glucose. The Mn(2+) site is built by Lys-529 and Asp-553. Asp-753 is an active-site residue. The helical transmembrane segment at 832 to 852 (IYPFTSLPLLAYCTLPAVCLL) threads the bilayer. Residues 853–860 (TGKFIMPP) lie on the Extracellular side of the membrane. Residues 861–881 (ISTFASLFFIALFISIFATGI) traverse the membrane as a helical segment. Topologically, residues 882 to 899 (LEMRWSGVSIEEWWRNEQ) are cytoplasmic. The helical transmembrane segment at 900 to 920 (FWVIGGVSAHLFAVVQGLLKV) threads the bilayer. Over 921-951 (LAGIDTNFTVTSKATGDEDDEFAELYAFKWT) the chain is Extracellular. Asn-927 carries an N-linked (GlcNAc...) asparagine glycan. A helical membrane pass occupies residues 952–972 (TLLIPPTTLLILNIIGVVAGV). Over 973–983 (SDAINNGSEAW) the chain is Cytoplasmic. A helical membrane pass occupies residues 984–1004 (GPLFGKLFFAFWVIVHLYPFL). Residues 1005 to 1013 (KGLMGRQNR) lie on the Extracellular side of the membrane. A helical transmembrane segment spans residues 1014–1034 (TPTIVVIWSVLLASIFSLLWV). At 1035-1055 (RIDPFTIKARGPDVRQCGINC) the chain is on the cytoplasmic side.

The protein belongs to the glycosyltransferase 2 family. Plant cellulose synthase subfamily. The cofactor is Mn(2+). Zn(2+) serves as cofactor.

It localises to the cell membrane. It carries out the reaction [(1-&gt;4)-beta-D-glucosyl](n) + UDP-alpha-D-glucose = [(1-&gt;4)-beta-D-glucosyl](n+1) + UDP + H(+). The protein operates within glycan metabolism; plant cellulose biosynthesis. In terms of biological role, catalytic subunit of cellulose synthase terminal complexes ('rosettes'), required for beta-1,4-glucan microfibril crystallization, a major mechanism of the cell wall formation. Involved in the secondary cell wall formation. This is Cellulose synthase A catalytic subunit 9 [UDP-forming] (CESA9) from Oryza sativa subsp. indica (Rice).